The chain runs to 339 residues: GTPase Obg (339 aa).

The region spanning 1–159 (MKFVDEAFVR…RELKLELKLL (159 aa)) is the Obg domain. Positions 127 to 147 (NTHFKSSTNRAPRRTTSGEEG) are disordered. Positions 160 to 333 (ADVGLLGLPN…LCYDLMSFLE (174 aa)) constitute an OBG-type G domain. Residues 166 to 173 (GLPNAGKS), 191 to 195 (FTTLY), 213 to 216 (DIPG), 283 to 286 (NKID), and 314 to 316 (SAI) contribute to the GTP site. Positions 173 and 193 each coordinate Mg(2+).

The protein belongs to the TRAFAC class OBG-HflX-like GTPase superfamily. OBG GTPase family. As to quaternary structure, monomer. Requires Mg(2+) as cofactor.

Its subcellular location is the cytoplasm. In terms of biological role, an essential GTPase which binds GTP, GDP and possibly (p)ppGpp with moderate affinity, with high nucleotide exchange rates and a fairly low GTP hydrolysis rate. Plays a role in control of the cell cycle, stress response, ribosome biogenesis and in those bacteria that undergo differentiation, in morphogenesis control. In Coxiella burnetii (strain CbuK_Q154) (Coxiella burnetii (strain Q154)), this protein is GTPase Obg.